The chain runs to 366 residues: Inhibin alpha chain (366 aa).

Residues 1-20 (MVSQRSLLLLLLLTLRDVDS) form the signal peptide. The propeptide occupies 21-63 (CQGPELVRELVLAKVKALFLDALGPPAMDGEGGDPGIRRLPRR). Residues 64–233 (HAVGGFMHRT…APSAGERARR (170 aa)) constitute a propeptide, inhibin alpha N-terminal region. N-linked (GlcNAc...) asparagine glycans are attached at residues Asn147 and Asn269. Intrachain disulfides connect Cys263/Cys328, Cys292/Cys363, and Cys296/Cys365.

Belongs to the TGF-beta family. As to quaternary structure, dimeric, linked by one or more disulfide bonds. Activin B is a dimer of alpha and beta-B. Inhibin A is a dimer of alpha and beta-A. Inhibin B is a dimer of alpha and beta-B. Interacts with TGFBR3L; this interaction regulates female fertility. In terms of processing, proteolytic processing yields a number of bioactive forms, consisting either solely of the mature alpha chain, of the most N-terminal propeptide linked through a disulfide bond to the mature alpha chain, or of the entire proprotein.

It localises to the secreted. Functionally, inhibins and activins inhibit and activate, respectively, the secretion of follitropin by the pituitary gland. Inhibins/activins are involved in regulating a number of diverse functions such as hypothalamic and pituitary hormone secretion, gonadal hormone secretion, germ cell development and maturation, erythroid differentiation, insulin secretion, nerve cell survival, embryonic axial development or bone growth, depending on their subunit composition. Inhibins appear to oppose the functions of activins. In terms of biological role, inhibin A is a dimer of alpha/INHA and beta-A/INHBA that functions as a feedback regulator in the hypothalamic-pituitary-gonadal (HPG) axis. Inhibits the secretion of FSH from the anterior pituitary gland by acting on pituitary gonadotrope cells. Antagonizes activin A by binding to the proteoglycan, betaglycan, and forming a stable complex with and, thereby, sequestering type II activin receptors while excluding type I receptor. Its function is as follows. Inhibin B is a dimer of alpha and beta-B that plays a crucial role in the regulation of the reproductive system by inhibiting the secretion of follicle-stimulating hormone (FSH) from the anterior pituitary gland. Thereby, maintains reproductive homeostasis in both males and females. Acts as a more potent suppressor of FSH release than inhibin A. Functions as competitive receptor antagonist binding activin type II receptors with high affinity in the presence of the TGF-beta type III coreceptor/TGFBR3L. The chain is Inhibin alpha chain (Inha) from Mus musculus (Mouse).